The following is a 104-amino-acid chain: UPF0125 protein PSPTO_4512 (104 aa).

It belongs to the UPF0125 (RnfH) family.

This is UPF0125 protein PSPTO_4512 from Pseudomonas syringae pv. tomato (strain ATCC BAA-871 / DC3000).